The chain runs to 359 residues: Ribosomal RNA large subunit methyltransferase M (359 aa).

S-adenosyl-L-methionine-binding positions include serine 186, 219–222 (CPGG), aspartate 238, aspartate 258, and aspartate 275. The active-site Proton acceptor is lysine 304.

This sequence belongs to the class I-like SAM-binding methyltransferase superfamily. RNA methyltransferase RlmE family. RlmM subfamily. In terms of assembly, monomer.

Its subcellular location is the cytoplasm. The enzyme catalyses cytidine(2498) in 23S rRNA + S-adenosyl-L-methionine = 2'-O-methylcytidine(2498) in 23S rRNA + S-adenosyl-L-homocysteine + H(+). In terms of biological role, catalyzes the 2'-O-methylation at nucleotide C2498 in 23S rRNA. The chain is Ribosomal RNA large subunit methyltransferase M from Vibrio vulnificus (strain YJ016).